Consider the following 565-residue polypeptide: NAD-dependent malic enzyme (565 aa).

The Proton donor role is filled by Tyr-104. Residue Arg-157 participates in NAD(+) binding. The Proton acceptor role is filled by Lys-175. Positions 246, 247, and 270 each coordinate a divalent metal cation. Residues Asp-270 and Asn-418 each contribute to the NAD(+) site.

Belongs to the malic enzymes family. Homotetramer. Requires Mg(2+) as cofactor. Mn(2+) serves as cofactor.

The enzyme catalyses (S)-malate + NAD(+) = pyruvate + CO2 + NADH. It carries out the reaction oxaloacetate + H(+) = pyruvate + CO2. This is NAD-dependent malic enzyme from Yersinia pseudotuberculosis serotype O:1b (strain IP 31758).